The primary structure comprises 326 residues: Hairy/enhancer-of-split related with YRPW motif-like protein (326 aa).

The interval 1–56 is disordered; sequence MKRPRAPSGSDGESDGPIDVGQENDLSQMARPLTTPSPSQMQARKKRRGIIEKRRR. The segment at 42 to 111 is transcriptional repression and interaction with NCOR1 and SIN3A; it reads QARKKRRGII…GGTGFFDARA (70 aa). The 56-residue stretch at 43-98 folds into the bHLH domain; the sequence is ARKKRRGIIEKRRRDRINSSLSELRRLVPTAFEKQGSSKLEKAEVLQMTVDHLKML. An Orange domain is found at 116–153; that stretch reads FRSIGFRECLTEVIRYLGVLEGPSSHADPVRIRLLSHL. Disordered regions lie at residues 223–260 and 272–306; these read HRPA…PPPT and PIPP…PTGR. Positions 292–305 are enriched in low complexity; the sequence is SGSISSPCPSGPTG.

This sequence belongs to the HEY family. Interacts with HES1, HDAC1, NCOR1 and SIN3A. Self-associates. Interacts with GATA4, GATA6, HEY1 and HEY2. As to expression, expressed in heart and at lower levels in brain, lung, muscle, ovary and testis.

The protein resides in the nucleus. Functionally, transcriptional repressor which binds preferentially to the canonical E box sequence 5'-CACGTG-3'. Downstream effector of Notch signaling required for cardiovascular development. Specifically required for the Notch-induced endocardial epithelial to mesenchymal transition, which is itself criticial for cardiac valve and septum development. Represses transcription by the cardiac transcriptional activators GATA4 and GATA6. This Mus musculus (Mouse) protein is Hairy/enhancer-of-split related with YRPW motif-like protein (Heyl).